We begin with the raw amino-acid sequence, 661 residues long: UvrABC system protein B (661 aa).

Positions K28–I414 constitute a Helicase ATP-binding domain. G41–T48 contributes to the ATP binding site. The Beta-hairpin motif lies at Y94 to I117. A Helicase C-terminal domain is found at Q432 to I598. Positions N604–Q625 are disordered. The span at T607–K617 shows a compositional bias: basic and acidic residues. In terms of domain architecture, UVR spans Q625–E660.

It belongs to the UvrB family. In terms of assembly, forms a heterotetramer with UvrA during the search for lesions. Interacts with UvrC in an incision complex.

The protein localises to the cytoplasm. The UvrABC repair system catalyzes the recognition and processing of DNA lesions. A damage recognition complex composed of 2 UvrA and 2 UvrB subunits scans DNA for abnormalities. Upon binding of the UvrA(2)B(2) complex to a putative damaged site, the DNA wraps around one UvrB monomer. DNA wrap is dependent on ATP binding by UvrB and probably causes local melting of the DNA helix, facilitating insertion of UvrB beta-hairpin between the DNA strands. Then UvrB probes one DNA strand for the presence of a lesion. If a lesion is found the UvrA subunits dissociate and the UvrB-DNA preincision complex is formed. This complex is subsequently bound by UvrC and the second UvrB is released. If no lesion is found, the DNA wraps around the other UvrB subunit that will check the other stand for damage. This chain is UvrABC system protein B, found in Staphylococcus haemolyticus (strain JCSC1435).